The primary structure comprises 564 residues: Dihydroxy-acid dehydratase (564 aa).

C55 is a [2Fe-2S] cluster binding site. D87 contacts Mg(2+). Residue C128 participates in [2Fe-2S] cluster binding. Residues D129 and K130 each coordinate Mg(2+). K130 is subject to N6-carboxylysine. [2Fe-2S] cluster is bound at residue C200. E452 is a Mg(2+) binding site. S478 functions as the Proton acceptor in the catalytic mechanism.

The protein belongs to the IlvD/Edd family. In terms of assembly, homodimer. Requires [2Fe-2S] cluster as cofactor. Mg(2+) is required as a cofactor.

It catalyses the reaction (2R)-2,3-dihydroxy-3-methylbutanoate = 3-methyl-2-oxobutanoate + H2O. The catalysed reaction is (2R,3R)-2,3-dihydroxy-3-methylpentanoate = (S)-3-methyl-2-oxopentanoate + H2O. It functions in the pathway amino-acid biosynthesis; L-isoleucine biosynthesis; L-isoleucine from 2-oxobutanoate: step 3/4. It participates in amino-acid biosynthesis; L-valine biosynthesis; L-valine from pyruvate: step 3/4. Its function is as follows. Functions in the biosynthesis of branched-chain amino acids. Catalyzes the dehydration of (2R,3R)-2,3-dihydroxy-3-methylpentanoate (2,3-dihydroxy-3-methylvalerate) into 2-oxo-3-methylpentanoate (2-oxo-3-methylvalerate) and of (2R)-2,3-dihydroxy-3-methylbutanoate (2,3-dihydroxyisovalerate) into 2-oxo-3-methylbutanoate (2-oxoisovalerate), the penultimate precursor to L-isoleucine and L-valine, respectively. This Polaromonas sp. (strain JS666 / ATCC BAA-500) protein is Dihydroxy-acid dehydratase.